Reading from the N-terminus, the 397-residue chain is Acetate kinase 2 (397 aa).

Asparagine 8 is a binding site for Mg(2+). Lysine 15 contributes to the ATP binding site. Arginine 89 contributes to the substrate binding site. Aspartate 146 acts as the Proton donor/acceptor in catalysis. Residues 206–210, 281–283, and 329–333 each bind ATP; these read HLGNG, DFR, and GVGEN. Position 380 (glutamate 380) interacts with Mg(2+).

It belongs to the acetokinase family. As to quaternary structure, homodimer. Mg(2+) serves as cofactor. The cofactor is Mn(2+).

It is found in the cytoplasm. The enzyme catalyses acetate + ATP = acetyl phosphate + ADP. Its pathway is metabolic intermediate biosynthesis; acetyl-CoA biosynthesis; acetyl-CoA from acetate: step 1/2. In terms of biological role, catalyzes the formation of acetyl phosphate from acetate and ATP. Can also catalyze the reverse reaction. In Listeria monocytogenes serovar 1/2a (strain ATCC BAA-679 / EGD-e), this protein is Acetate kinase 2.